The chain runs to 552 residues: Nucleolar complex protein 4 (552 aa).

It belongs to the CBF/MAK21 family. Interacts with NOP14 and MPP10. Interacts with snoRNA U3. Component of the ribosomal small subunit (SSU) processome composed of at least 40 protein subunits and snoRNA U3.

It is found in the nucleus. The protein localises to the nucleolus. Functionally, involved in nucleolar processing of pre-18S ribosomal RNA and ribosome assembly. Has a role in the nuclear export of 40S pre-ribosomal subunit to the cytoplasm. Its subcellular location and association with pre-40S subunit are unaffected by RPS19 disruptions, suggesting it acts before the ribosomal protein. The chain is Nucleolar complex protein 4 (NOC4) from Saccharomyces cerevisiae (strain ATCC 204508 / S288c) (Baker's yeast).